Here is a 313-residue protein sequence, read N- to C-terminus: Ornithine carbamoyltransferase (313 aa).

Carbamoyl phosphate is bound by residues 57 to 60, Arg-108, and 135 to 138; these read STRT and HPTQ. Residues Asn-167, Asp-231, and 235–236 contribute to the L-ornithine site; that span reads SM. Residues 272–273 and Arg-300 each bind carbamoyl phosphate; that span reads CL.

Belongs to the aspartate/ornithine carbamoyltransferase superfamily. OTCase family.

The protein localises to the cytoplasm. It carries out the reaction carbamoyl phosphate + L-ornithine = L-citrulline + phosphate + H(+). Its pathway is amino-acid biosynthesis; L-arginine biosynthesis; L-arginine from L-ornithine and carbamoyl phosphate: step 1/3. In terms of biological role, reversibly catalyzes the transfer of the carbamoyl group from carbamoyl phosphate (CP) to the N(epsilon) atom of ornithine (ORN) to produce L-citrulline. The protein is Ornithine carbamoyltransferase of Thermotoga maritima (strain ATCC 43589 / DSM 3109 / JCM 10099 / NBRC 100826 / MSB8).